A 370-amino-acid chain; its full sequence is Phospho-N-acetylmuramoyl-pentapeptide-transferase (370 aa).

The next 11 helical transmembrane spans lie at 21–41 (PTSI…DLFI), 46–66 (LLVP…WGII), 92–112 (PSMG…LFAL), 117–137 (FSKQ…IGLI), 151–171 (LSVK…LVLI), 181–201 (ILIF…IALF), 217–237 (DGLA…ELII), 243–263 (NYAI…FLIF), 270–290 (VFMG…VALL), 298–318 (LIMG…VGVF), and 349–369 (TIIV…AIML).

This sequence belongs to the glycosyltransferase 4 family. MraY subfamily. It depends on Mg(2+) as a cofactor.

It is found in the cell inner membrane. It carries out the reaction UDP-N-acetyl-alpha-D-muramoyl-L-alanyl-gamma-D-glutamyl-meso-2,6-diaminopimeloyl-D-alanyl-D-alanine + di-trans,octa-cis-undecaprenyl phosphate = di-trans,octa-cis-undecaprenyl diphospho-N-acetyl-alpha-D-muramoyl-L-alanyl-D-glutamyl-meso-2,6-diaminopimeloyl-D-alanyl-D-alanine + UMP. It participates in cell wall biogenesis; peptidoglycan biosynthesis. In terms of biological role, catalyzes the initial step of the lipid cycle reactions in the biosynthesis of the cell wall peptidoglycan: transfers peptidoglycan precursor phospho-MurNAc-pentapeptide from UDP-MurNAc-pentapeptide onto the lipid carrier undecaprenyl phosphate, yielding undecaprenyl-pyrophosphoryl-MurNAc-pentapeptide, known as lipid I. The polypeptide is Phospho-N-acetylmuramoyl-pentapeptide-transferase (Prochlorococcus marinus (strain SARG / CCMP1375 / SS120)).